Consider the following 1071-residue polypeptide: ATP-dependent helicase/deoxyribonuclease subunit B (1071 aa).

The protein belongs to the helicase family. AddB/RexB type 2 subfamily. Heterodimer of AddA and RexB. Mg(2+) is required as a cofactor.

Functionally, the heterodimer acts as both an ATP-dependent DNA helicase and an ATP-dependent, dual-direction single-stranded exonuclease. Recognizes the chi site generating a DNA molecule suitable for the initiation of homologous recombination. This subunit has 5' -&gt; 3' nuclease activity but not helicase activity. The chain is ATP-dependent helicase/deoxyribonuclease subunit B from Streptococcus pyogenes serotype M28 (strain MGAS6180).